Consider the following 469-residue polypeptide: Glutamate--tRNA ligase (469 aa).

The 'HIGH' region motif lies at 9 to 19 (PSPTGFLHVGG). Positions 98, 100, 125, and 127 each coordinate Zn(2+). The 'KMSKS' region signature appears at 236-240 (KLSKR). Lys239 serves as a coordination point for ATP.

The protein belongs to the class-I aminoacyl-tRNA synthetase family. Glutamate--tRNA ligase type 1 subfamily. In terms of assembly, monomer. Zn(2+) serves as cofactor.

The protein localises to the cytoplasm. The enzyme catalyses tRNA(Glu) + L-glutamate + ATP = L-glutamyl-tRNA(Glu) + AMP + diphosphate. In terms of biological role, catalyzes the attachment of glutamate to tRNA(Glu) in a two-step reaction: glutamate is first activated by ATP to form Glu-AMP and then transferred to the acceptor end of tRNA(Glu). The polypeptide is Glutamate--tRNA ligase (Shewanella loihica (strain ATCC BAA-1088 / PV-4)).